The sequence spans 459 residues: WD repeat-containing protein 41 (459 aa).

WD repeat units lie at residues 40-79 (KAHH…KLLE), 82-128 (GHTQ…QVQR), 131-168 (CFQS…LCKT), 220-258 (DHQD…MQAY), 321-359 (AHDS…QLAA), and 403-441 (GHSS…SGLR).

As to quaternary structure, component of the C9orf72-SMCR8 complex, at least composed of C9orf72, SMCR8 and WDR41. The complex is formed of two protomers, each individually consisting of one molecule each of C9orf72, SMCR8 and WDR41. The protomers homodimerize via an interaction between C9orf72 (via C-terminus) and SMCR8 (via N-terminus). Within each protomer SMCR8 (via DENN domain) acts as a bridging protein between WDR41 (via C-terminus and N-terminus) and C9orf72 (via C-terminus). The C9orf72-SMCR8 complex associates with the ULK1/ATG1 kinase complex.

The protein localises to the cytoplasm. Its function is as follows. Non-catalytic component of the C9orf72-SMCR8 complex, a complex that has guanine nucleotide exchange factor (GEF) activity and regulates autophagy. The C9orf72-SMCR8 complex promotes the exchange of GDP to GTP, converting inactive GDP-bound RAB8A and RAB39B into their active GTP-bound form, thereby promoting autophagosome maturation. As part of the C9orf72-SMCR8 complex, stimulates RAB8A and RAB11A GTPase activity in vitro, however WDR42 is shown not be an essential complex component for this function. The C9orf72-SMCR8 complex also acts as a negative regulator of autophagy initiation by interacting with the ULK1/ATG1 kinase complex and inhibiting its protein kinase activity. The polypeptide is WD repeat-containing protein 41 (Homo sapiens (Human)).